Reading from the N-terminus, the 362-residue chain is Peptide chain release factor 2 (362 aa).

Position 250 is an N5-methylglutamine (Q250).

It belongs to the prokaryotic/mitochondrial release factor family. Post-translationally, methylated by PrmC. Methylation increases the termination efficiency of RF2.

It localises to the cytoplasm. In terms of biological role, peptide chain release factor 2 directs the termination of translation in response to the peptide chain termination codons UGA and UAA. This is Peptide chain release factor 2 from Clostridium perfringens (strain ATCC 13124 / DSM 756 / JCM 1290 / NCIMB 6125 / NCTC 8237 / Type A).